The primary structure comprises 352 residues: Heavy metal-associated isoprenylated plant protein 36 (352 aa).

Residues tyrosine 29–glutamate 92 form the HMA domain. Cysteine 40 and cysteine 43 together coordinate a metal cation. 3 disordered regions span residues threonine 96 to aspartate 150, glutamine 162 to glutamate 211, and proline 229 to proline 252. Positions serine 97–asparagine 107 are enriched in polar residues. The span at glutamate 118 to asparagine 128 shows a compositional bias: acidic residues. Gly residues predominate over residues asparagine 133–asparagine 148. A compositionally biased stretch (basic residues) spans lysine 172–serine 183. Positions glutamate 192–proline 203 are enriched in gly residues. The residue at position 349 (cysteine 349) is a Cysteine methyl ester. Cysteine 349 carries the S-farnesyl cysteine lipid modification. Residues cysteine 350–methionine 352 constitute a propeptide, removed in mature form.

It belongs to the HIPP family.

Functionally, heavy-metal-binding protein. This Arabidopsis thaliana (Mouse-ear cress) protein is Heavy metal-associated isoprenylated plant protein 36.